Here is an 89-residue protein sequence, read N- to C-terminus: Large ribosomal subunit protein eL43 (89 aa).

C38, C41, C56, and C59 together coordinate Zn(2+). Residues 38–59 (CPVCHKRAVKRVGTGIWRCTKC) form a C4-type zinc finger.

It belongs to the eukaryotic ribosomal protein eL43 family. Putative zinc-binding subfamily. In terms of assembly, part of the 50S ribosomal subunit. It depends on Zn(2+) as a cofactor.

In terms of biological role, binds to the 23S rRNA. The protein is Large ribosomal subunit protein eL43 of Methanopyrus kandleri (strain AV19 / DSM 6324 / JCM 9639 / NBRC 100938).